The following is a 953-amino-acid chain: Coiled-coil domain-containing protein 14 (953 aa).

The segment covering 1–21 (MKRGIRRDPFRKRKLGGRAKK) has biased composition (basic residues). Disordered stretches follow at residues 1-22 (MKRG…AKKV) and 52-72 (SGAR…AKLT). Position 124 is a phosphoserine (S124). 2 disordered regions span residues 126-189 (SETA…TSDL) and 268-287 (PPCP…SQFA). Positions 145 to 154 (YGSKKKRHEK) are enriched in basic residues. Basic and acidic residues predominate over residues 169–187 (DNKKQIPNEASARSERDTS). Residues 277 to 287 (EVQTDGNSQFA) are compositionally biased toward polar residues. Coiled-coil stretches lie at residues 383-413 (LATN…RDTK) and 483-618 (AMQP…AEKE). S670, S754, and S798 each carry phosphoserine.

In terms of assembly, interacts with CEP63.

The protein resides in the cytoplasm. The protein localises to the cytoskeleton. It localises to the microtubule organizing center. It is found in the centrosome. Its subcellular location is the centriolar satellite. Negatively regulates centriole duplication. Negatively regulates CEP63 and CDK2 centrosomal localization. The chain is Coiled-coil domain-containing protein 14 (CCDC14) from Homo sapiens (Human).